The sequence spans 362 residues: N5-carboxyaminoimidazole ribonucleotide synthase (362 aa).

ATP contacts are provided by residues Arg108, Lys148, 153–159 (GYDGKGQ), 185–188 (EGFV), Glu193, His216, and 270–271 (NE). Residues 112–300 (KQFLNESGIE…QFEQHIRAVA (189 aa)) form the ATP-grasp domain.

The protein belongs to the PurK/PurT family. As to quaternary structure, homodimer.

It catalyses the reaction 5-amino-1-(5-phospho-beta-D-ribosyl)imidazole + hydrogencarbonate + ATP = 5-carboxyamino-1-(5-phospho-D-ribosyl)imidazole + ADP + phosphate + 2 H(+). The protein operates within purine metabolism; IMP biosynthesis via de novo pathway; 5-amino-1-(5-phospho-D-ribosyl)imidazole-4-carboxylate from 5-amino-1-(5-phospho-D-ribosyl)imidazole (N5-CAIR route): step 1/2. Its function is as follows. Catalyzes the ATP-dependent conversion of 5-aminoimidazole ribonucleotide (AIR) and HCO(3)(-) to N5-carboxyaminoimidazole ribonucleotide (N5-CAIR). In Brucella melitensis biotype 1 (strain ATCC 23456 / CCUG 17765 / NCTC 10094 / 16M), this protein is N5-carboxyaminoimidazole ribonucleotide synthase.